The following is a 312-amino-acid chain: Putative 1-aminocyclopropane-1-carboxylate deaminase (312 aa).

Lys-42 is subject to N6-(pyridoxal phosphate)lysine.

Belongs to the ACC deaminase/D-cysteine desulfhydrase family. The cofactor is pyridoxal 5'-phosphate.

The enzyme catalyses 1-aminocyclopropane-1-carboxylate + H2O = 2-oxobutanoate + NH4(+). In Thermotoga maritima (strain ATCC 43589 / DSM 3109 / JCM 10099 / NBRC 100826 / MSB8), this protein is Putative 1-aminocyclopropane-1-carboxylate deaminase.